Here is a 649-residue protein sequence, read N- to C-terminus: Probable potassium transport system protein Kup (649 aa).

A run of 12 helical transmembrane segments spans residues 1–21 (MAIV…LYTM), 42–62 (ILSL…VFIA), 84–104 (GAWL…DSVL), 126–146 (IMSG…VCLF), 159–179 (TFGT…LVNL), 195–215 (VEFL…TVFL), 235–255 (IYFT…GQGA), 286–306 (VAVL…ITGA), 334–354 (LYIP…LAMF), 364–384 (YGLA…VYIW), 390–410 (VGAV…FFAS), and 414–434 (FLHG…IMYT).

It belongs to the HAK/KUP transporter (TC 2.A.72) family.

It is found in the cell membrane. The enzyme catalyses K(+)(in) + H(+)(in) = K(+)(out) + H(+)(out). Functionally, transport of potassium into the cell. Likely operates as a K(+):H(+) symporter. The protein is Probable potassium transport system protein Kup of Bifidobacterium adolescentis (strain ATCC 15703 / DSM 20083 / NCTC 11814 / E194a).